The chain runs to 154 residues: Large-conductance mechanosensitive channel (154 aa).

Helical transmembrane passes span 12 to 32 (GNIVDLAVAVVIGTAFTALIT) and 71 to 91 (IVLSAAINFLLIALVVYFLVV). The segment at 129-154 (NGAPSGRHVDTADLTPTPNHEPRADT) is disordered.

This sequence belongs to the MscL family. Homopentamer.

Its subcellular location is the cell membrane. Functionally, channel that opens in response to stretch forces in the membrane lipid bilayer. May participate in the regulation of osmotic pressure changes within the cell. The protein is Large-conductance mechanosensitive channel of Mycobacterium leprae (strain Br4923).